Reading from the N-terminus, the 540-residue chain is Zinc finger CCCH domain-containing protein 46 (540 aa).

The C3H1-type zinc-finger motif lies at Gly148–Gly175. An RRM domain is found at Arg258–Lys334. Basic and acidic residues-rich tracts occupy residues Val337 to Leu351 and Glu436 to Gly450. Disordered stretches follow at residues Val337–Gly365, Glu436–Ser469, and Ser490–Ser514. Position 451 is a phosphoserine (Ser451). Low complexity predominate over residues Ser490–Ser511.

In terms of biological role, possesses RNA-binding and ribonuclease activities in vitro. This Arabidopsis thaliana (Mouse-ear cress) protein is Zinc finger CCCH domain-containing protein 46.